The sequence spans 227 residues: Cytochrome c oxidase subunit 2 (227 aa).

The Mitochondrial intermembrane segment spans residues 1-14 (MAYPLQLGLQDATS). The helical transmembrane segment at 15–45 (PIMEELMNFHDHTLMIVFLISSLVLYIISLM) threads the bilayer. Over 46–59 (LTTKLTHTSTMDAQ) the chain is Mitochondrial matrix. A helical membrane pass occupies residues 60–87 (EVETIWTILPAVILIMIALPSLRILYMM). At 88-227 (DEINNPVLTV…HFENWSASMI (140 aa)) the chain is on the mitochondrial intermembrane side. The Cu cation site is built by His161, Cys196, Glu198, Cys200, His204, and Met207. Glu198 is a binding site for Mg(2+).

Belongs to the cytochrome c oxidase subunit 2 family. In terms of assembly, component of the cytochrome c oxidase (complex IV, CIV), a multisubunit enzyme composed of 14 subunits. The complex is composed of a catalytic core of 3 subunits MT-CO1, MT-CO2 and MT-CO3, encoded in the mitochondrial DNA, and 11 supernumerary subunits COX4I, COX5A, COX5B, COX6A, COX6B, COX6C, COX7A, COX7B, COX7C, COX8 and NDUFA4, which are encoded in the nuclear genome. The complex exists as a monomer or a dimer and forms supercomplexes (SCs) in the inner mitochondrial membrane with NADH-ubiquinone oxidoreductase (complex I, CI) and ubiquinol-cytochrome c oxidoreductase (cytochrome b-c1 complex, complex III, CIII), resulting in different assemblies (supercomplex SCI(1)III(2)IV(1) and megacomplex MCI(2)III(2)IV(2)). Found in a complex with TMEM177, COA6, COX18, COX20, SCO1 and SCO2. Interacts with TMEM177 in a COX20-dependent manner. Interacts with COX20. Interacts with COX16. The cofactor is Cu cation.

Its subcellular location is the mitochondrion inner membrane. The catalysed reaction is 4 Fe(II)-[cytochrome c] + O2 + 8 H(+)(in) = 4 Fe(III)-[cytochrome c] + 2 H2O + 4 H(+)(out). Functionally, component of the cytochrome c oxidase, the last enzyme in the mitochondrial electron transport chain which drives oxidative phosphorylation. The respiratory chain contains 3 multisubunit complexes succinate dehydrogenase (complex II, CII), ubiquinol-cytochrome c oxidoreductase (cytochrome b-c1 complex, complex III, CIII) and cytochrome c oxidase (complex IV, CIV), that cooperate to transfer electrons derived from NADH and succinate to molecular oxygen, creating an electrochemical gradient over the inner membrane that drives transmembrane transport and the ATP synthase. Cytochrome c oxidase is the component of the respiratory chain that catalyzes the reduction of oxygen to water. Electrons originating from reduced cytochrome c in the intermembrane space (IMS) are transferred via the dinuclear copper A center (CU(A)) of subunit 2 and heme A of subunit 1 to the active site in subunit 1, a binuclear center (BNC) formed by heme A3 and copper B (CU(B)). The BNC reduces molecular oxygen to 2 water molecules using 4 electrons from cytochrome c in the IMS and 4 protons from the mitochondrial matrix. This chain is Cytochrome c oxidase subunit 2 (MT-CO2), found in Zelotomys hildegardeae (Hildegarde's broad-headed mouse).